A 69-amino-acid chain; its full sequence is Large ribosomal subunit protein uL30 (69 aa).

Belongs to the universal ribosomal protein uL30 family. In terms of assembly, part of the 50S ribosomal subunit.

The sequence is that of Large ribosomal subunit protein uL30 from Rhizobium etli (strain CIAT 652).